Reading from the N-terminus, the 368-residue chain is Peptidoglycan-recognition protein LA (368 aa).

The Cytoplasmic portion of the chain corresponds to 1-127 (MFEENNSPTT…KSPSRRVTRN (127 aa)). Disordered regions lie at residues 21–46 (QRAS…GLPL) and 101–122 (INSN…SPSR). 2 stretches are compositionally biased toward low complexity: residues 33-43 (TSAGSSTSSSG) and 102-113 (NSNNANGNGNAN). A helical membrane pass occupies residues 128–148 (TILLITLILLVLATGLIVLYV). At 149 to 368 (ELNRPKPELP…MKTESWDAKQ (220 aa)) the chain is on the extracellular side. Cysteines 221 and 227 form a disulfide. The region spanning 233-320 (TIQDSAIAEK…DVDYKLVAQN (88 aa)) is the N-acetylmuramoyl-L-alanine amidase domain. 2 N-linked (GlcNAc...) asparagine glycosylation sites follow: Asn-273 and Asn-320.

This sequence belongs to the N-acetylmuramoyl-L-alanine amidase 2 family. In terms of tissue distribution, expressed in uninduced hemocytes and mbn-2 cells.

It is found in the cell membrane. In terms of biological role, peptidoglycan-recognition protein probably involved in innate immunity by binding to peptidoglycans (PGN) of bacteria and activating the immune response. This is Peptidoglycan-recognition protein LA (PGRP-LA) from Drosophila melanogaster (Fruit fly).